A 323-amino-acid polypeptide reads, in one-letter code: uncharacterized protein (323 aa).

Tyr-59 (proton donor) is an active-site residue. Residue 198 to 208 participates in NADP(+) binding; sequence SPLAQGLLGGK.

It belongs to the aldo/keto reductase family. Aldo/keto reductase 2 subfamily.

This is an uncharacterized protein from Mycobacterium tuberculosis (strain CDC 1551 / Oshkosh).